The primary structure comprises 876 residues: Phosphoenolpyruvate carboxylase (876 aa).

Residues His138 and Lys543 contribute to the active site.

This sequence belongs to the PEPCase type 1 family. The cofactor is Mg(2+).

It carries out the reaction oxaloacetate + phosphate = phosphoenolpyruvate + hydrogencarbonate. Its function is as follows. Forms oxaloacetate, a four-carbon dicarboxylic acid source for the tricarboxylic acid cycle. The chain is Phosphoenolpyruvate carboxylase from Aliivibrio salmonicida (strain LFI1238) (Vibrio salmonicida (strain LFI1238)).